The primary structure comprises 394 residues: Argininosuccinate synthase (394 aa).

8–16 (AYSGGLDTS) provides a ligand contact to ATP. L-citrulline contacts are provided by Y86 and S91. G116 provides a ligand contact to ATP. L-aspartate is bound by residues T118, N122, and D123. L-citrulline is bound at residue N122. L-citrulline-binding residues include R126, S172, S181, E257, and Y269.

This sequence belongs to the argininosuccinate synthase family. Type 1 subfamily. In terms of assembly, homotetramer.

It is found in the cytoplasm. The catalysed reaction is L-citrulline + L-aspartate + ATP = 2-(N(omega)-L-arginino)succinate + AMP + diphosphate + H(+). The protein operates within amino-acid biosynthesis; L-arginine biosynthesis; L-arginine from L-ornithine and carbamoyl phosphate: step 2/3. This Methanosarcina acetivorans (strain ATCC 35395 / DSM 2834 / JCM 12185 / C2A) protein is Argininosuccinate synthase.